Reading from the N-terminus, the 284-residue chain is 2,3,4,5-tetrahydropyridine-2,6-dicarboxylate N-succinyltransferase (284 aa).

2 residues coordinate substrate: R111 and D148.

This sequence belongs to the transferase hexapeptide repeat family. In terms of assembly, homotrimer.

Its subcellular location is the cytoplasm. It carries out the reaction (S)-2,3,4,5-tetrahydrodipicolinate + succinyl-CoA + H2O = (S)-2-succinylamino-6-oxoheptanedioate + CoA. It participates in amino-acid biosynthesis; L-lysine biosynthesis via DAP pathway; LL-2,6-diaminopimelate from (S)-tetrahydrodipicolinate (succinylase route): step 1/3. In Brucella melitensis biotype 2 (strain ATCC 23457), this protein is 2,3,4,5-tetrahydropyridine-2,6-dicarboxylate N-succinyltransferase.